The chain runs to 213 residues: GTP cyclohydrolase 1 (213 aa).

Zn(2+) contacts are provided by Cys104, His107, and Cys175.

This sequence belongs to the GTP cyclohydrolase I family. As to quaternary structure, homomer.

The enzyme catalyses GTP + H2O = 7,8-dihydroneopterin 3'-triphosphate + formate + H(+). It functions in the pathway cofactor biosynthesis; 7,8-dihydroneopterin triphosphate biosynthesis; 7,8-dihydroneopterin triphosphate from GTP: step 1/1. This chain is GTP cyclohydrolase 1, found in Brucella suis (strain ATCC 23445 / NCTC 10510).